Here is a 22-residue protein sequence, read N- to C-terminus: Antimicrobial peptide 4 (22 aa).

As to expression, expressed by the skin glands.

The protein resides in the secreted. Functionally, has very strong antimicrobial activity against Gram-positive bacterium S.aureus and yeast C.albicans, and very weak activity against Gram-negative bacterium E.coli. Has strong hemolytic activity against human red blood cells. The polypeptide is Antimicrobial peptide 4 (Xenopus tropicalis (Western clawed frog)).